The primary structure comprises 286 residues: S-methyl-5'-thioadenosine phosphorylase (286 aa).

Residues S11, 53 to 54, and 86 to 87 contribute to the phosphate site; these read RH and SA. M185 contacts substrate. A phosphate-binding site is contributed by T186. 209 to 211 provides a ligand contact to substrate; the sequence is DYD.

Belongs to the PNP/MTAP phosphorylase family. MTAP subfamily. As to quaternary structure, homohexamer. Dimer of a homotrimer.

It catalyses the reaction S-methyl-5'-thioadenosine + phosphate = 5-(methylsulfanyl)-alpha-D-ribose 1-phosphate + adenine. The protein operates within amino-acid biosynthesis; L-methionine biosynthesis via salvage pathway; S-methyl-5-thio-alpha-D-ribose 1-phosphate from S-methyl-5'-thioadenosine (phosphorylase route): step 1/1. In terms of biological role, catalyzes the reversible phosphorylation of S-methyl-5'-thioadenosine (MTA) to adenine and 5-methylthioribose-1-phosphate. Involved in the breakdown of MTA, a major by-product of polyamine biosynthesis. Responsible for the first step in the methionine salvage pathway after MTA has been generated from S-adenosylmethionine. Has broad substrate specificity with 6-aminopurine nucleosides as preferred substrates. The sequence is that of S-methyl-5'-thioadenosine phosphorylase from Geobacter sulfurreducens (strain ATCC 51573 / DSM 12127 / PCA).